Here is a 283-residue protein sequence, read N- to C-terminus: Formamidopyrimidine-DNA glycosylase (283 aa).

Pro-2 functions as the Schiff-base intermediate with DNA in the catalytic mechanism. The Proton donor role is filled by Glu-3. Catalysis depends on Lys-58, which acts as the Proton donor; for beta-elimination activity. Residues His-100, Arg-119, and Arg-162 each coordinate DNA. The FPG-type zinc-finger motif lies at 247–283; the sequence is DVYGREGEPCRRAGCDGTVQRITQSGRSSFYCAQCQR. Arg-273 serves as the catalytic Proton donor; for delta-elimination activity.

It belongs to the FPG family. As to quaternary structure, monomer. Requires Zn(2+) as cofactor.

It carries out the reaction Hydrolysis of DNA containing ring-opened 7-methylguanine residues, releasing 2,6-diamino-4-hydroxy-5-(N-methyl)formamidopyrimidine.. The enzyme catalyses 2'-deoxyribonucleotide-(2'-deoxyribose 5'-phosphate)-2'-deoxyribonucleotide-DNA = a 3'-end 2'-deoxyribonucleotide-(2,3-dehydro-2,3-deoxyribose 5'-phosphate)-DNA + a 5'-end 5'-phospho-2'-deoxyribonucleoside-DNA + H(+). Its function is as follows. Involved in base excision repair of DNA damaged by oxidation or by mutagenic agents. Acts as a DNA glycosylase that recognizes and removes damaged bases. Has a preference for oxidized purines, such as 7,8-dihydro-8-oxoguanine (8-oxoG). Has AP (apurinic/apyrimidinic) lyase activity and introduces nicks in the DNA strand. Cleaves the DNA backbone by beta-delta elimination to generate a single-strand break at the site of the removed base with both 3'- and 5'-phosphates. The polypeptide is Formamidopyrimidine-DNA glycosylase (Ruegeria pomeroyi (strain ATCC 700808 / DSM 15171 / DSS-3) (Silicibacter pomeroyi)).